The following is a 224-amino-acid chain: Small ribosomal subunit protein uS3 (224 aa).

The region spanning 38 to 106 is the KH type-2 domain; that stretch reads IRKFISKKLK…QVHINIVEIK (69 aa).

It belongs to the universal ribosomal protein uS3 family. As to quaternary structure, part of the 30S ribosomal subunit. Forms a tight complex with proteins S10 and S14.

In terms of biological role, binds the lower part of the 30S subunit head. Binds mRNA in the 70S ribosome, positioning it for translation. The protein is Small ribosomal subunit protein uS3 of Lactobacillus helveticus (strain DPC 4571).